Reading from the N-terminus, the 334-residue chain is Serine racemase (334 aa).

Residue glutamate 13 participates in Mg(2+) binding. 5 residues coordinate ATP: serine 31, serine 32, isoleucine 33, lysine 51, and threonine 52. Active-site proton acceptor residues include lysine 56 and serine 84. Position 56 is an N6-(pyridoxal phosphate)lysine (lysine 56). Asparagine 86 serves as a coordination point for pyridoxal 5'-phosphate. Glutamine 89 serves as a coordination point for ATP. Cysteine 113 carries the post-translational modification S-nitrosocysteine. ATP is bound at residue tyrosine 121. Position 154 (asparagine 154) interacts with pyridoxal 5'-phosphate. A Mg(2+)-binding site is contributed by aspartate 178. 5 residues coordinate pyridoxal 5'-phosphate: glycine 185, glycine 186, glycine 187, glycine 188, and methionine 189. Mg(2+)-binding residues include glutamate 210, alanine 214, aspartate 216, and asparagine 247. Ca(2+) contacts are provided by glutamate 210, alanine 214, aspartate 216, and asparagine 247. Residues glutamate 210, alanine 214, and aspartate 216 each coordinate Mn(2+). Lysine 279 is a binding site for ATP. Serine 313 is a binding site for pyridoxal 5'-phosphate. Asparagine 316 serves as a coordination point for ATP.

It belongs to the serine/threonine dehydratase family. Homodimer. It depends on Mg(2+) as a cofactor. Mn(2+) serves as cofactor. Ca(2+) is required as a cofactor. The cofactor is pyridoxal 5'-phosphate. S-nitrosylated, leading to decrease the enzyme activity.

It catalyses the reaction L-serine = D-serine. The catalysed reaction is L-serine = pyruvate + NH4(+). It carries out the reaction D-serine = pyruvate + NH4(+). Catalyzes the synthesis of D-serine from L-serine. D-serine is a key coagonist with glutamate at NMDA receptors. Has dehydratase activity towards both L-serine and D-serine. The sequence is that of Serine racemase (SRR) from Bos taurus (Bovine).